We begin with the raw amino-acid sequence, 546 residues long: MAAKDIRFGEDARTRMVRGVNVLANAVKATLGPKGRNVVLEKSFGAPTITKDGVSVAKEIELADKFENMGAQMVKEVASKTNDNAGDGTTTATVLAQALIREGAKAVAAGMNPMDLKRGIDQAVKAAVVELKNISKPTTDDKAIAQVGTISANSDESIGNIIAEAMKKVGKEGVITVEEGSGLENELDVVEGMQFDRGYLSPYFINNQQSQSADLDDPFILLHDKKISNVRDLLPVLEGVAKAGKPLLIVAEEVEGEALATLVVNTIRGIVKVVAVKAPGFGDRRKAMLEDMAVLTGGTVISEEVGLALEKATIKDLGRAKKVQVSKENTTIIDGAGDSAAIESRVGQIKTQIEDTSSDYDREKLQERVAKLAGGVAVIKVGASTEIEMKEKKARVEDALHATRAAVEEGVVPGGGVALVRALVAVGNLTGANEDQTHGIQIALRAMEAPLREIVANAGEEPSVILNKVKEGTGNYGYNAANGEFGDMVEFGILDPTKVTRSALQNAASIAGLMITTEAMVADAPKKDEPAMPAGGGMGGMGGMDF.

Residues 30–33, lysine 51, 87–91, glycine 415, 479–481, and aspartate 495 contribute to the ATP site; these read TLGP, DGTTT, and NAA. Residues 526–546 form a disordered region; the sequence is KKDEPAMPAGGGMGGMGGMDF. Residues 534-546 show a composition bias toward gly residues; that stretch reads AGGGMGGMGGMDF.

It belongs to the chaperonin (HSP60) family. As to quaternary structure, forms a cylinder of 14 subunits composed of two heptameric rings stacked back-to-back. Interacts with the co-chaperonin GroES.

It localises to the cytoplasm. The enzyme catalyses ATP + H2O + a folded polypeptide = ADP + phosphate + an unfolded polypeptide.. Together with its co-chaperonin GroES, plays an essential role in assisting protein folding. The GroEL-GroES system forms a nano-cage that allows encapsulation of the non-native substrate proteins and provides a physical environment optimized to promote and accelerate protein folding. The sequence is that of Chaperonin GroEL from Xanthomonas oryzae pv. oryzae (strain MAFF 311018).